Reading from the N-terminus, the 228-residue chain is Leucyl/phenylalanyl-tRNA--protein transferase (228 aa).

The protein belongs to the L/F-transferase family.

Its subcellular location is the cytoplasm. The enzyme catalyses N-terminal L-lysyl-[protein] + L-leucyl-tRNA(Leu) = N-terminal L-leucyl-L-lysyl-[protein] + tRNA(Leu) + H(+). The catalysed reaction is N-terminal L-arginyl-[protein] + L-leucyl-tRNA(Leu) = N-terminal L-leucyl-L-arginyl-[protein] + tRNA(Leu) + H(+). It catalyses the reaction L-phenylalanyl-tRNA(Phe) + an N-terminal L-alpha-aminoacyl-[protein] = an N-terminal L-phenylalanyl-L-alpha-aminoacyl-[protein] + tRNA(Phe). Its function is as follows. Functions in the N-end rule pathway of protein degradation where it conjugates Leu, Phe and, less efficiently, Met from aminoacyl-tRNAs to the N-termini of proteins containing an N-terminal arginine or lysine. In Thiobacillus denitrificans (strain ATCC 25259 / T1), this protein is Leucyl/phenylalanyl-tRNA--protein transferase.